The chain runs to 459 residues: UDP-N-acetylmuramoylalanine--D-glutamate ligase (459 aa).

118–124 serves as a coordination point for ATP; that stretch reads GTNGKTT.

Belongs to the MurCDEF family.

It is found in the cytoplasm. The catalysed reaction is UDP-N-acetyl-alpha-D-muramoyl-L-alanine + D-glutamate + ATP = UDP-N-acetyl-alpha-D-muramoyl-L-alanyl-D-glutamate + ADP + phosphate + H(+). It functions in the pathway cell wall biogenesis; peptidoglycan biosynthesis. Its function is as follows. Cell wall formation. Catalyzes the addition of glutamate to the nucleotide precursor UDP-N-acetylmuramoyl-L-alanine (UMA). This Desulfosudis oleivorans (strain DSM 6200 / JCM 39069 / Hxd3) (Desulfococcus oleovorans) protein is UDP-N-acetylmuramoylalanine--D-glutamate ligase.